We begin with the raw amino-acid sequence, 354 residues long: MESEYREMLLLTGLDHITEEELKRFKYFALTEFQIARSTLDVADRTELADHLIQSAGAASAVTKAINIFQKLNYMHIANALEEKKKEAERKLMTNTKKRGTQKVENRSQAENCSAASATRSDNDFKEQAATEVCPQAKPQKKQMVAEQEAIREDLQKDPLVVTVLKAINPFECETQEGRQEIFHATVATETDFFFVKVLNAQFKDKFIPKRTIKISNYLWHSNFMEVTSSSVVVDVESNHEVPNNVVKRARETPRISKLKIQPCGTIVNGLFKVQKITEEKDRVLYGIHDKTGTMEVLVLGNPSKTKCEEGDKIRLTFFEVSKNGVKIQLKSGPCSFFKVIKAAKPKTDMKSVE.

The 87-residue stretch at 1–87 folds into the Pyrin domain; it reads MESEYREMLL…ANALEEKKKE (87 aa). Residues 95-124 are disordered; it reads NTKKRGTQKVENRSQAENCSAASATRSDND. Residues 109 to 120 are compositionally biased toward polar residues; that stretch reads QAENCSAASATR. Residues 144 to 341 enclose the HIN-200 domain; sequence MVAEQEAIRE…SGPCSFFKVI (198 aa).

The protein belongs to the HIN-200 family. Self-associates; forms homooligomers in response to cytosolic double-stranded DNA (dsDNA) and the dsDNA seems to serve as oligomerization platform. Component of AIM2 inflammasome, which consists of a signal sensor component (AIM2), an adapter (PYCARD/ASC), which recruits an effector pro-inflammatory caspase (CASP1). Interacts (via pyrin domain) with PYCARD/ASC (via pyrin domain); interaction is direct. Component of the AIM2 PANoptosome complex, a multiprotein complex that drives inflammatory cell death (PANoptosis). Interacts with EIF2AK2/PKR. Interacts with MAPRE1. Interacts (via HIN-200 domain) with IFI202 (via HIN-200 domain 2); preventing activation of the AIM2 inflammasome. Interacts with RACK1; promoting association with PP2A phosphatase and dephosphorylation of AKT1. Interacts with TRIM11; promoting AIM2 recruitment to autophagosomes and autophagy-dependent degradation. Degraded via selective autophagy following interaction with TRIM11. In terms of tissue distribution, expressed in developing neurons. Highly expressed in regulatory T-cells (Treg).

It localises to the cytoplasm. Its subcellular location is the inflammasome. It is found in the nucleus. Its activity is regulated as follows. Inactive in absence of double-stranded DNA (dsDNA). Homooligomerizes upon binding to dsDNA, dsDNA serving as an oligomerization platform. AIM2 requires large dsDNA to generate a structural template that couples dsDNA ligand-binding and homooligomerization. Homooligomerization is followed by recruitment of PYCARD/ASC to initiate speck formation (nucleation). AIM2 and PYCARD/ASC homooligomer filaments assemble bidirectionally and the recognition between AIM2 and PYCARD/ASC oligomers occurs in a head-to-tail manner. Clustered PYCARD/ASC nucleates the formation of CASP1 filaments through the interaction of their respective CARD domains, acting as a platform for CASP1 polymerization and activation. Active CASP1 then specifically processes protein precursors, such as gasdermin-D (GSDMD), IL1B and IL18, leading to the release of mature cytokines in the extracellular milieu or pyroptosis, depending on cell type. AIM2 can be activated in response to events that cause genomic DNA (HIV protease inhibitor nelfinavir) or mitochondrial DNA release in the cytoplasm (such as Perfluoroalkyl substance pollutants or cholesterol overload). Activation of the AIM2 inflammasome is inhibited by IFI202. Activation of the AIM2 inflammasome is inhibited by TRIM11, which promotes autophagy-dependent degradation of AIM2. Its function is as follows. Sensor component of the AIM2 inflammasome, which mediates inflammasome activation in response to the presence of double-stranded DNA (dsDNA) in the cytosol, leading to subsequent pyroptosis. Inflammasomes are supramolecular complexes that assemble in the cytosol in response to pathogens and other damage-associated signals and play critical roles in innate immunity and inflammation. Acts as a recognition receptor (PRR): specifically recognizes and binds dsDNA in the cytosol, and mediates the formation of the inflammasome polymeric complex composed of AIM2, CASP1 and PYCARD/ASC. Recruitment of pro-caspase-1 (proCASP1) to the AIM2 inflammasome promotes caspase-1 (CASP1) activation, which subsequently cleaves and activates inflammatory cytokines IL1B and IL18 and gasdermin-D (GSDMD), promoting cytokine secretion. In some cells, CASP1 activation mediates cleavage and activation of GSDMD, triggering pyroptosis without promoting cytokine secretion. Detects cytosolic dsDNA of viral and bacterial origin in a non-sequence-specific manner. Involved in the DNA damage response caused by acute ionizing radiation by mediating pyroptosis of intestinal epithelial cells and bone marrow cells in response to double-strand DNA breaks. Mechanistically, AIM2 senses DNA damage in the nucleus to mediate inflammasome assembly and inflammatory cell death. Also acts as a regulator of neurodevelopment via its role in the DNA damage response: acts by promoting neural cell death in response to DNA damage in the developing brain, thereby purging genetically compromised cells of the central nervous system. Pyroptosis mediated by the AIM2 inflammasome in response to DNA damage is dependent on GSDMD without involving IL1B and IL18 cytokine secretion. Also acts as a mediator of pyroptosis, necroptosis and apoptosis (PANoptosis), an integral part of host defense against pathogens, in response to bacterial infection. Can also trigger PYCARD/ASC-dependent, caspase-1-independent cell death that involves caspase-8 (CASP8). In terms of biological role, also acts as a tumor suppressor independently of its role in inflammatory response. Able to suppress overt cell proliferation in enterocytes: restricts stem cell proliferation in the intestinal mucosa in an inflammasome-independent manner, contributing to a decrease in the likelihood of colorectal cancer development. AIM2 suppresses cell proliferation by inhibiting phosphorylation of AKT1 at 'Ser-473', preventing AKT1 activation and AKT-mTOR signaling pathway. Inhibits AKT1 phosphorylation both by inhibiting the activity of PRKDC/DNA-PK kinase and promoting dephosphorylation by PP2A phosphatase. Also acts as a key regulator of regulatory T-cells (Treg) homeostasis by promoting their stability: acts by preventing AKT1 activation. Its role in Treg homeostasis is important to restain autoimmune diseases. This chain is Interferon-inducible protein AIM2, found in Mus musculus (Mouse).